The primary structure comprises 272 residues: Flt3 receptor-interacting lectin (272 aa).

The N-terminal stretch at 1–8 (MFPSKVKS) is a signal peptide. 2 residues coordinate alpha-D-mannopyranose: Asp-94 and Gly-112. Residues Asn-125 and Asn-131 are each glycosylated (N-linked (GlcNAc...) asparagine). Residues Asn-152 and 237–238 (QD) each bind alpha-D-mannopyranose.

It belongs to the leguminous lectin family. Dimer (alpha/beta)2. Tetramer (alpha/beta)4. Glycosylated at Asn-125 by either a paucimannose type N-glycan (alpha-4) or a single N-acetylglucosamine (alpha-3). Glycosylated at Asn-131 by a paucimannose type N-glycan (alpha-2, alpha-3 and alpha-4). In alpha-2, Asn-125 is deamidated to an Asp, possibly due to the action of intrinsic peptide N-glycosidase (PGNase).

The protein localises to the protein storage vacuole lumen. Functionally, mannose-binding lectin. Accommodates most effectively a non-reducing terminal alpha-d-mannosyl unit. Strongly precipitates murine IgM but not IgG. The chain is Flt3 receptor-interacting lectin from Lablab purpureus (Hyacinth bean).